Reading from the N-terminus, the 515-residue chain is BURP domain-containing protein 9 (515 aa).

An N-terminal signal peptide occupies residues 1-29; sequence MKATGGPLPLILFLLIIIVLITAQHTAIA. The BURP domain occupies 292–507; the sequence is YFFEDNLAPG…GRGSIIWVPV (216 aa). 3 N-linked (GlcNAc...) asparagine glycosylation sites follow: Asn321, Asn332, and Asn470.

As to expression, expressed in shoot and panicles.

The protein is BURP domain-containing protein 9 (BURP9) of Oryza sativa subsp. japonica (Rice).